The primary structure comprises 712 residues: TGF-beta-activated kinase 1 and MAP3K7-binding protein 3 (712 aa).

A2 carries the N-acetylalanine modification. Positions 8 to 51 constitute a CUE domain; that stretch reads LDIQVLHDLRQRFPEIPEGVVSQCMLQNNNNLEACCRALSQESS. 3 positions are modified to phosphoserine: S60, S101, and S103. Disordered regions lie at residues 141–189, 227–345, 369–447, and 475–509; these read FMNE…HIPR, PGSI…KQGS, TVEP…SPRV, and ERSA…SSGS. Residues 163 to 173 are compositionally biased toward polar residues; it reads MQTGMNPSAMQ. Low complexity-rich tracts occupy residues 233–249 and 269–290; these read RQTS…QSTP and YPHQ…IPQS. A compositionally biased stretch (pro residues) spans 322–332; that stretch reads PPSPSTTPPHP. Composition is skewed to polar residues over residues 336-345 and 371-404; these read GPPSYQKQGS and EPSQ…TATT. S385 is subject to Phosphoserine. Phosphothreonine is present on T404. Positions 405–417 are enriched in low complexity; sequence PPSSSPSRGISSQ. Phosphoserine is present on residues S409 and S492. At S506 the chain carries Phosphoserine; by MAPKAPK2 and MAPKAPK3. Residues 517–559 are a coiled coil; that stretch reads ALLLHQRARMERLAKQLKLEKEELERLKSEVNGMEHDLMQRRL. Residues 609–636 are disordered; that stretch reads MNNFYDNIEPGPVVPPKPSKKDSSDPCT. Residues 627 to 636 are compositionally biased toward basic and acidic residues; sequence SKKDSSDPCT. Residue K649 forms a Glycyl lysine isopeptide (Lys-Gly) (interchain with G-Cter in ubiquitin) linkage. Residues 658 to 667 show a composition bias toward basic and acidic residues; it reads QAAAADEHRT. The tract at residues 658 to 682 is disordered; the sequence is QAAAADEHRTGSTQSPRTQPRDEDY. The RanBP2-type zinc finger occupies 682 to 712; it reads YEGAPWNCDSCTFLNHPALNRCEQCEMPRYT. C692 carries the post-translational modification (Microbial infection) S-methylcysteine.

As to quaternary structure, interacts with TAB1, TAB2, MAP3K7, TRAF2 and TRAF6. The minimal TAB3-containing complex (TAB1-MAP3K7-TAB3) appears not to contain TAB2. However, it seems sensible to consider that TAB2 may also join this complex and may act in a cooperative manner with TAB3. Interacts with DYNC2I2 (via the WD domains). Interacts with RBCK1. Binds 'Lys-63'-linked polyubiquitin chains. Interacts with TRIM5. Interacts with TRIM38 (via B30.2/SPRY domain), leading to its translocation to lysosomes and degradation. Interacts with ASB1. (Microbial infection) Interacts with M.tuberculosis PtpA, which blocks the NF-kappa-B signaling pathway. In terms of processing, ubiquitinated; following IL1 stimulation or TRAF6 overexpression. Ubiquitinated by AMFR via 'Lys-27'-linked polyubiquitination; leading to TAK1/MAP3K7 activation. Post-translationally, degraded in a lysosome-dependent manner following interaction with TRIM38. Phosphorylated at Ser-506 by MAPKAPK2 and MAPKAPK3 following IL1 treatment. In terms of processing, (Microbial infection) Methylated at Cys-692 by enteropathogenic E.coli protein NleE or S.flexneri protein OspZ: methylation disrupts zinc-binding and ability to bind 'Lys-63'-linked ubiquitin, leading to NF-kappa-B inactivation. In terms of tissue distribution, widely expressed. Constitutively overexpressed in certain tumor tissues. Major transcript. As to expression, minor transcript.

In terms of biological role, adapter required to activate the JNK and NF-kappa-B signaling pathways through the specific recognition of 'Lys-63'-linked polyubiquitin chains by its RanBP2-type zinc finger (NZF). Acts as an adapter linking MAP3K7/TAK1 and TRAF6 to 'Lys-63'-linked polyubiquitin chains. The RanBP2-type zinc finger (NZF) specifically recognizes Lys-63'-linked polyubiquitin chains unanchored or anchored to the substrate proteins such as RIPK1/RIP1 and RIPK2: this acts as a scaffold to organize a large signaling complex to promote autophosphorylation of MAP3K7/TAK1, and subsequent activation of I-kappa-B-kinase (IKK) core complex by MAP3K7/TAK1. Its function is as follows. May be an oncogenic factor. The sequence is that of TGF-beta-activated kinase 1 and MAP3K7-binding protein 3 from Homo sapiens (Human).